A 602-amino-acid polypeptide reads, in one-letter code: Ligand-dependent nuclear receptor corepressor-like protein (602 aa).

The disordered stretch occupies residues 104–124 (PSLDSSQSTPTEELSSQGQSN). Over residues 106 to 124 (LDSSQSTPTEELSSQGQSN) the composition is skewed to polar residues. Glycyl lysine isopeptide (Lys-Gly) (interchain with G-Cter in SUMO2) cross-links involve residues K242, K319, K340, and K397. Disordered regions lie at residues 495–521 (TVDGTSENTEDGLDRKDSKQPRKKRGR) and 564–602 (ERSGTLKTPPKKKLRLPDTGLYNMTDSGTGSCKNSSKPV). Positions 516–568 (RKKRGRYRQYDHEIMEEAIAMVMSGKMSVSKAQGIYGVPHSTLEYKVKERSGT) constitute an HTH psq-type domain. The segment at residues 544-564 (VSKAQGIYGVPHSTLEYKVKE) is a DNA-binding region (H-T-H motif). The segment covering 585 to 602 (YNMTDSGTGSCKNSSKPV) has biased composition (polar residues).

Its subcellular location is the nucleus. In terms of biological role, may act as transcription activator that binds DNA elements with the sequence 5'-CCCTATCGATCGATCTCTACCT-3'. May play a role in spermatogenesis. The polypeptide is Ligand-dependent nuclear receptor corepressor-like protein (LCORL) (Homo sapiens (Human)).